Reading from the N-terminus, the 356-residue chain is Peptide chain release factor 1 (356 aa).

An N5-methylglutamine modification is found at glutamine 233.

It belongs to the prokaryotic/mitochondrial release factor family. Post-translationally, methylated by PrmC. Methylation increases the termination efficiency of RF1.

The protein resides in the cytoplasm. In terms of biological role, peptide chain release factor 1 directs the termination of translation in response to the peptide chain termination codons UAG and UAA. This chain is Peptide chain release factor 1, found in Halalkalibacterium halodurans (strain ATCC BAA-125 / DSM 18197 / FERM 7344 / JCM 9153 / C-125) (Bacillus halodurans).